Consider the following 24-residue polypeptide: Humanin-like 11 (24 aa).

Belongs to the humanin family.

It is found in the secreted. Its subcellular location is the cytoplasm. Functionally, plays a role as a neuroprotective and antiapoptotic factor. The polypeptide is Humanin-like 11 (Homo sapiens (Human)).